A 227-amino-acid polypeptide reads, in one-letter code: Bone marrow proteoglycan (227 aa).

Residues 1–16 form the signal peptide; it reads MKFPLLLALLVGGAFA. Positions 17–110 are cleaved as a propeptide — acidic; sequence LHLSSEASDS…TSLMGDSGFK (94 aa). The segment at 21-105 is disordered; that stretch reads SEASDSKSPL…KEEDTTSLMG (85 aa). O-linked (GalNAc...) serine glycosylation occurs at S24. Positions 34 to 46 are enriched in basic and acidic residues; that stretch reads SLPREAEISRPEV. The segment covering 58 to 70 has biased composition (acidic residues); it reads LEEEEEEEEEEGS. O-linked (Xyl...) (chondroitin sulfate) serine glycosylation occurs at S70. Residues 128 to 227 form the C-type lectin domain; that stretch reads LVCRSCYRGT…GKRRPFICAY (100 aa). Intrachain disulfides connect C130–C225 and C202–C217.

Post-translationally, nitrated.

The protein localises to the secreted. In terms of biological role, cytotoxin and helminthotoxin. MBP also induces non-cytolytic histamine release from basophils. It is involved in antiparasitic defense mechanisms and immune hypersensitivity reactions. The polypeptide is Bone marrow proteoglycan (Prg2) (Rattus norvegicus (Rat)).